The sequence spans 311 residues: uncharacterized protein (311 aa).

10 consecutive transmembrane segments (helical) span residues 6 to 26 (IFIL…KMLA), 33 to 53 (PFQV…PMAV), 70 to 90 (YLAL…QFAV), 97 to 117 (TAAV…YFIL), 123 to 143 (GITI…FNPA), 155 to 175 (LIGI…TVIS), 185 to 205 (YVFN…LLVV), 219 to 239 (ILVL…CYLG), 244 to 264 (TSAV…TVLA), and 265 to 285 (ILIL…FIII). 2 consecutive EamA domains span residues 12–141 (AIFY…IIFN) and 166–292 (VVWS…INYS).

This sequence belongs to the EamA transporter family.

The protein resides in the cell membrane. This is an uncharacterized protein from Clostridium kluyveri (strain ATCC 8527 / DSM 555 / NBRC 12016 / NCIMB 10680 / K1).